A 351-amino-acid polypeptide reads, in one-letter code: Anthranilate phosphoribosyltransferase (351 aa).

5-phospho-alpha-D-ribose 1-diphosphate is bound by residues Gly-80, Gly-83–Asp-84, Thr-88, Asn-90–Thr-93, Lys-108–Ser-116, and Ser-120. Gly-80 lines the anthranilate pocket. Ser-92 is a binding site for Mg(2+). Asn-111 lines the anthranilate pocket. Anthranilate is bound at residue Arg-166. Mg(2+) contacts are provided by Asp-229 and Glu-230.

Belongs to the anthranilate phosphoribosyltransferase family. As to quaternary structure, homodimer. Mg(2+) serves as cofactor.

It carries out the reaction N-(5-phospho-beta-D-ribosyl)anthranilate + diphosphate = 5-phospho-alpha-D-ribose 1-diphosphate + anthranilate. The protein operates within amino-acid biosynthesis; L-tryptophan biosynthesis; L-tryptophan from chorismate: step 2/5. Functionally, catalyzes the transfer of the phosphoribosyl group of 5-phosphorylribose-1-pyrophosphate (PRPP) to anthranilate to yield N-(5'-phosphoribosyl)-anthranilate (PRA). The polypeptide is Anthranilate phosphoribosyltransferase (Prosthecochloris aestuarii (strain DSM 271 / SK 413)).